Here is a 380-residue protein sequence, read N- to C-terminus: Actinidain (380 aa).

Residues 1–24 (MGLPKSFVSMSLLFFSTLLILSLA) form the signal peptide. Residues 25-126 (FNAKNLTQRT…NRYEPRVGQV (102 aa)) constitute a propeptide, activation peptide. Residues asparagine 29, asparagine 81, and asparagine 111 are each glycosylated (N-linked (GlcNAc...) asparagine). Intrachain disulfides connect cysteine 148–cysteine 191, cysteine 182–cysteine 224, and cysteine 282–cysteine 332. Cysteine 151 is an active-site residue. Active-site residues include histidine 288 and asparagine 308.

Belongs to the peptidase C1 family. As to expression, fruit, present in small cells of the outer pericarp of mature fruit, but not large cells.

The enzyme catalyses Specificity close to that of papain.. In terms of biological role, cysteine protease responsible for the cleavage of kiwellin into kissper and KiTH. The protein is Actinidain of Actinidia deliciosa (Kiwi).